The following is a 494-amino-acid chain: MSYMVARMQKMKAGNLGGAFKHNERVFETHSNKDINPSRSHLNYELTDRDRSVSYEKQIKDYVNENKVSNRAIRKDAVLCDEWIITSDKDFFEKLDEEQTRTFFETAKNYFAENYGESNIAYASVHLDESTPHMHMGVVPFENGKLSSKAMFDREELKHIQEDLPRYMSDHGFELERGKLNSEAKHKTVAEFKRAMADMELKEELLEKYHAPPFVDERTGELNNDTEAFWHEKEFADMFEVQSPIRETTNQEKMDWLRKQYQEELKKLESSKKPLEDDLSHLEELLDKKTKEYIKIDSEASERASELSKAEGYINTLENHSKSLEAKIECLESDNLQLEKQKATKLEAKALNESELRELKPKKNFLGKEHYELSPEQFEGLKAEVYRSRTLLHHKDIELEQAKRQVSLRASKNYFTASLERAKEKAKGESIDRLKSEIKRLKNENSILRQQNDKMLGKLRELMPDKAFKNLLSELKAIKPIVNIIKKAIEKSLF.

Residues Tyr44 and Tyr115 each coordinate DNA.

It belongs to the plasmid mobilization pre family.

In terms of biological role, the interaction of the RSA site and the PRE protein may not only serves a function in plasmid maintenance, but may also contributes to the distribution of small antibiotic resistance plasmids among Gram-positive bacteria. The chain is Plasmid recombination enzyme (pre) from Streptococcus agalactiae.